A 161-amino-acid chain; its full sequence is Allophycocyanin alpha chain (161 aa).

N4-methylasparagine is present on Asn71. Residue Cys81 participates in (2R,3E)-phycocyanobilin binding.

Belongs to the phycobiliprotein family. In terms of assembly, component of the phycobilisome. Heterodimer of an alpha and a beta chain. Contains one covalently linked phycocyanobilin chromophore.

It is found in the cellular thylakoid membrane. Light-harvesting photosynthetic bile pigment-protein from the phycobiliprotein complex. Allophycocyanin has a maximum absorption at approximately 650 nanometers. This is Allophycocyanin alpha chain (apcA) from Arthrospira platensis (Spirulina platensis).